An 814-amino-acid polypeptide reads, in one-letter code: Phenylalanine--tRNA ligase beta subunit (814 aa).

A tRNA-binding domain is found at 39–153; sequence SARAKGVVVG…ELPALGAPVA (115 aa). In terms of domain architecture, B5 spans 414–498; it reads ADASSVLLRR…RLVGFDRFGA (85 aa). Mg(2+) is bound by residues Asp-476, Asp-482, Glu-485, and Glu-486. The FDX-ACB domain maps to 720 to 813; it reads PTVPASERDL…LVKQHGAELR (94 aa).

Belongs to the phenylalanyl-tRNA synthetase beta subunit family. Type 1 subfamily. As to quaternary structure, tetramer of two alpha and two beta subunits. Mg(2+) is required as a cofactor.

The protein resides in the cytoplasm. The enzyme catalyses tRNA(Phe) + L-phenylalanine + ATP = L-phenylalanyl-tRNA(Phe) + AMP + diphosphate + H(+). In Parasynechococcus marenigrum (strain WH8102), this protein is Phenylalanine--tRNA ligase beta subunit.